The chain runs to 489 residues: 3-octaprenyl-4-hydroxybenzoate carboxy-lyase (489 aa).

Asparagine 172 lines the Mn(2+) pocket. Residues 175–177 (IYR), 189–191 (RWL), and 194–195 (RG) contribute to the prenylated FMN site. Glutamate 238 serves as a coordination point for Mn(2+). Aspartate 287 serves as the catalytic Proton donor.

This sequence belongs to the UbiD family. As to quaternary structure, homohexamer. The cofactor is prenylated FMN. Mn(2+) is required as a cofactor.

Its subcellular location is the cell membrane. The catalysed reaction is a 4-hydroxy-3-(all-trans-polyprenyl)benzoate + H(+) = a 2-(all-trans-polyprenyl)phenol + CO2. Its pathway is cofactor biosynthesis; ubiquinone biosynthesis. Its function is as follows. Catalyzes the decarboxylation of 3-octaprenyl-4-hydroxy benzoate to 2-octaprenylphenol, an intermediate step in ubiquinone biosynthesis. In Aeromonas salmonicida (strain A449), this protein is 3-octaprenyl-4-hydroxybenzoate carboxy-lyase.